A 46-amino-acid polypeptide reads, in one-letter code: Large ribosomal subunit protein bL36 (46 aa).

Belongs to the bacterial ribosomal protein bL36 family.

The polypeptide is Large ribosomal subunit protein bL36 (Escherichia coli O7:K1 (strain IAI39 / ExPEC)).